Reading from the N-terminus, the 166-residue chain is Protein SprT (166 aa).

The 145-residue stretch at 20-164 folds into the SprT-like domain; the sequence is EHLANANRKL…CVRCGDLLVA (145 aa). Histidine 78 contacts Zn(2+). Glutamate 79 is an active-site residue. Histidine 82 serves as a coordination point for Zn(2+).

Belongs to the SprT family. Zn(2+) serves as cofactor.

The protein resides in the cytoplasm. This chain is Protein SprT, found in Klebsiella pneumoniae subsp. pneumoniae (strain ATCC 700721 / MGH 78578).